The primary structure comprises 237 residues: Proteasome subunit alpha type-5-A (237 aa).

Position 1 is an N-acetylmethionine (Met1). Residues Lys43 and Lys66 each participate in a glycyl lysine isopeptide (Lys-Gly) (interchain with G-Cter in ubiquitin) cross-link.

Belongs to the peptidase T1A family. As to quaternary structure, component of the 20S core complex of the 26S proteasome. The 26S proteasome is composed of a core protease (CP), known as the 20S proteasome, capped at one or both ends by the 19S regulatory particle (RP/PA700). The 20S proteasome core is composed of 28 subunits that are arranged in four stacked rings, resulting in a barrel-shaped structure. The two end rings are each formed by seven alpha subunits, and the two central rings are each formed by seven beta subunits. The catalytic chamber with the active sites is on the inside of the barrel.

It is found in the cytoplasm. The protein resides in the nucleus. Its function is as follows. The proteasome is a multicatalytic proteinase complex which is characterized by its ability to cleave peptides with Arg, Phe, Tyr, Leu, and Glu adjacent to the leaving group at neutral or slightly basic pH. The proteasome has an ATP-dependent proteolytic activity. The protein is Proteasome subunit alpha type-5-A (PAE1) of Arabidopsis thaliana (Mouse-ear cress).